The following is a 65-amino-acid chain: Kappa-scoloptoxin(04)-Ssd1a (65 aa).

Residues 1–24 form the signal peptide; the sequence is MKKTCVVSVFLVLLLLKFHDLSMG. A propeptide spanning residues 25-36 is cleaved from the precursor; that stretch reads EEISPLKKVAPR. Intrachain disulfides connect cysteine 42–cysteine 53 and cysteine 47–cysteine 60.

Expressed by the venom gland.

The protein resides in the secreted. Functionally, voltage-gated potassium channel inhibitor. This chain is Kappa-scoloptoxin(04)-Ssd1a, found in Scolopendra dehaani (Thai centipede).